The sequence spans 591 residues: Chaperone protein DnaK (591 aa).

Thr175 is subject to Phosphothreonine; by autocatalysis. Residues 568–577 are compositionally biased toward low complexity; the sequence is AQAAEFANKQ. Positions 568–591 are disordered; sequence AQAAEFANKQNESDPNNNSSEQNN. A compositionally biased stretch (polar residues) spans 580–591; it reads SDPNNNSSEQNN.

This sequence belongs to the heat shock protein 70 family.

Its function is as follows. Acts as a chaperone. The chain is Chaperone protein DnaK from Mycoplasma mycoides subsp. mycoides SC (strain CCUG 32753 / NCTC 10114 / PG1).